The sequence spans 690 residues: Elongation factor G (690 aa).

One can recognise a tr-type G domain in the interval 8–283; that stretch reads EKYRNIGIMA…AVVDYLPSPL (276 aa). Residues 17–24, 81–85, and 135–138 contribute to the GTP site; these read AHIDAGKT, DTPGH, and NKLD.

The protein belongs to the TRAFAC class translation factor GTPase superfamily. Classic translation factor GTPase family. EF-G/EF-2 subfamily.

The protein localises to the cytoplasm. In terms of biological role, catalyzes the GTP-dependent ribosomal translocation step during translation elongation. During this step, the ribosome changes from the pre-translocational (PRE) to the post-translocational (POST) state as the newly formed A-site-bound peptidyl-tRNA and P-site-bound deacylated tRNA move to the P and E sites, respectively. Catalyzes the coordinated movement of the two tRNA molecules, the mRNA and conformational changes in the ribosome. This chain is Elongation factor G, found in Rhizorhabdus wittichii (strain DSM 6014 / CCUG 31198 / JCM 15750 / NBRC 105917 / EY 4224 / RW1) (Sphingomonas wittichii).